Consider the following 443-residue polypeptide: KH domain-containing, RNA-binding, signal transduction-associated protein 1 (443 aa).

A disordered region spans residues 1 to 94 (MQRRDDPASR…PLLPPSATAA (94 aa)). Ser18 and Ser20 each carry phosphoserine. Lys21 bears the N6-acetyllysine mark. Phosphoserine is present on Ser29. Thr33 is subject to Phosphothreonine. Residues Arg45 and Arg52 each carry the asymmetric dimethylarginine; by PRMT1 modification. Residue Ser58 is modified to Phosphoserine; by MAPK1. The span at 61–72 (TQPPPLLPPSTP) shows a compositional bias: pro residues. Phosphothreonine; by MAPK1 is present on residues Thr71 and Thr84. The segment covering 81–94 (SAPTPLLPPSATAA) has biased composition (low complexity). Residues Lys96 and Lys102 each participate in a glycyl lysine isopeptide (Lys-Gly) (interchain with G-Cter in SUMO2) cross-link. Residues 100–260 (ENKYLPELMA…VKKFLVPDMM (161 aa)) are involved in homodimerization. Ser113 is modified (phosphoserine). Lys139 participates in a covalent cross-link: Glycyl lysine isopeptide (Lys-Gly) (interchain with G-Cter in SUMO2). Position 150 is a phosphoserine (Ser150). Residues 171 to 197 (NFVGKILGPQGNTIKRLQEETGAKISV) form the KH domain. Lys175 carries the post-translational modification N6-acetyllysine; alternate. Lys175 is covalently cross-linked (Glycyl lysine isopeptide (Lys-Gly) (interchain with G-Cter in SUMO2); alternate). Residue Thr183 is modified to Phosphothreonine. A disordered region spans residues 280-317 (PSRGRGVSVRGRGAAPPPPPVPRGRGVGPPRGALVRGT). An omega-N-methylarginine mark is found at Arg282, Arg284, and Arg291. Residues 283–293 (GRGVSVRGRGA) show a composition bias toward low complexity. Position 304 is an asymmetric dimethylarginine (Arg304). The span at 307–316 (GPPRGALVRG) shows a compositional bias: low complexity. An omega-N-methylarginine; by PRMT1 mark is found at Arg310 and Arg315. Arg320 carries the dimethylated arginine; alternate modification. Arg320 carries the omega-N-methylarginine; by PRMT1; alternate modification. Arg325 is subject to Omega-N-methylarginine; by PRMT1. Residues 326–345 (GATVTRGVPPPPTVRGAPTP) form a disordered region. Residues Arg331 and Arg340 each carry the dimethylated arginine; alternate modification. Omega-N-methylarginine; by PRMT1; alternate occurs at positions 331 and 340. Position 331 is an asymmetric dimethylarginine; alternate (Arg331). The interaction with HNRNPA1 stretch occupies residues 351–443 (GIQRIPLPPT…AYREHPYGRY (93 aa)). Position 387 is a phosphotyrosine (Tyr387). Ser390 is subject to Phosphoserine. Residues 400 to 420 (GHGELQDSYEAYGQDDWNGTR) are interaction with ZBTB7A. The segment at 411-443 (YGQDDWNGTRPSLKAPPARPVKGAYREHPYGRY) is disordered. Lys432 participates in a covalent cross-link: Glycyl lysine isopeptide (Lys-Gly) (interchain with G-Cter in SUMO2). Basic and acidic residues predominate over residues 434-443 (AYREHPYGRY). A phosphotyrosine; by PTK6 mark is found at Tyr435, Tyr440, and Tyr443.

Belongs to the KHDRBS family. In terms of assembly, self-associates to form homooligomers when bound to RNA, oligomerization appears to be limited when binding to proteins. Forms a trimeric complex in the nucleus consisting of BANP, HDAC6 and KHDRBS1/SAM68; HDAC6 keeps KHDRBS1 in a deacetylated state which inhibits the inclusion of CD44 alternate exons. The complex is disrupted by MAPK1/MAPK3-mediated phosphorylation of BANP which results in BANP export to the cytoplasm. This facilitates acetylation of KHDRBS1 and CD44 variant exon inclusion. Interacts with KHDRBS3/SLIM-2 and KHDRBS2/SLIM-1; heterooligomer formation of KHDRBS family proteins may modulate RNA substrate specificity. Interacts with RASA1, FYN, GRB2, PLCG1, SRC, CBP and PRMT1. Interacts with PTK6 (via SH3 and SH2 domains). Forms a complex with ILF2, ILF3, YLPM1, RBMX, NCOA5 and PPP1CA. Binds WBP4/FBP21 (via WW domains), FNBP4/FBP30 (via WW domains). Interacts (via Arg/Gly-rich-flanked Pro-rich regions) with FYN (via the SH3 domain). Interacts with APC, HNRNPA1. Interacts with the non-receptor tyrosine kinase SRMS; the interaction leads to phosphorylation of KHDRBS1. Interacts with ZBTB7A; negatively regulates KHDRBS1 splicing activity toward BCL2L1. Post-translationally, tyrosine phosphorylated by several non-receptor tyrosine kinases including LCK, FYN and JAK3. Also tyrosine phosphorylated by the non-receptor tyrosine kinase SRMS in an EGF-dependent manner. Phosphorylation by PTK6 negatively regulates its RNA binding ability. Phosphorylation by PTK6 at Tyr-440 dictates the nuclear localization of KHDRBS1. Phosphorylation by MAPK1 at Ser-58, Thr-71 and Thr-84 regulates CD44 alternative splicing by promoting CD44 exon v5 inclusion. In terms of processing, acetylated. Positively correlates with ability to bind RNA. Deacetylated by HDAC6; this regulates alternative splicing by inhibiting the inclusion of CD44 alternate exons. Arginine methylation is required for nuclear localization. Inhibits interaction with Src-like SH3 domains, but not interaction with WW domains of WBP4/FBP21 and FNBP4/FBP30. In adult cerebellum expressed in most neuronal cell populations, specifically in cerebellar granule cells of the internal granular layer, ROR(alpha)-positive Purkinje cells, internal granular layer and molecular layer interneurons (at protein level).

It is found in the nucleus. The protein resides in the cytoplasm. It localises to the membrane. Recruited and tyrosine phosphorylated by several receptor systems, for example the T-cell, leptin and insulin receptors. Once phosphorylated, functions as an adapter protein in signal transduction cascades by binding to SH2 and SH3 domain-containing proteins. Role in G2-M progression in the cell cycle. Represses CBP-dependent transcriptional activation apparently by competing with other nuclear factors for binding to CBP. Also acts as a putative regulator of mRNA stability and/or translation rates and mediates mRNA nuclear export. Positively regulates the association of constitutive transport element (CTE)-containing mRNA with large polyribosomes and translation initiation. May not be involved in the nucleocytoplasmic export of unspliced (CTE)-containing RNA species. RNA-binding protein that plays a role in the regulation of alternative splicing and influences mRNA splice site selection and exon inclusion. Binds to RNA containing 5'-[AU]UAA-3' as a bipartite motif spaced by more than 15 nucleotides. Binds poly(A). In cooperation with HNRNPA1 modulates alternative splicing of BCL2L1 by promoting splicing toward isoform Bcl-X(S), and of SMN1. Can regulate CD44 alternative splicing in a Ras pathway-dependent manner. Can regulate alternative splicing of NRXN1 and NRXN3 in the laminin G-like domain 6 containing the evolutionary conserved neurexin alternative spliced segment 4 (AS4) involved in neurexin selective targeting to postsynaptic partners. In a neuronal activity-dependent manner cooperates synergistically with KHDRBS2/SLIM-1 in regulation of NRXN1 exon skipping at AS4. The cooperation with KHDRBS2/SLIM-1 is antagonistic for regulation of NXRN3 alternative splicing at AS4. The protein is KH domain-containing, RNA-binding, signal transduction-associated protein 1 of Mus musculus (Mouse).